The following is a 637-amino-acid chain: Acyl-CoA ligase cm3C (637 aa).

ATP-binding positions include 282-290 (TSGTSGRQK), 423-428 (HAWGLT), aspartate 507, arginine 526, and lysine 624. Residues 353–423 (DMQRMLGSVA…SLQPSWEFLH (71 aa)) are SBD1. Residues 424–486 (AWGLTETCIV…YKAPNMFVGY (63 aa)) are SBD2.

The protein belongs to the ATP-dependent AMP-binding enzyme family.

Its pathway is secondary metabolite biosynthesis. Functionally, acyl-CoA ligase; part of the gene cluster that mediates the biosynthesis of beauveriolides I and III, cyclodepsipeptides acting as inhibitors of the acyl-CoA:cholesterol acyltransferase. The HR-PKS cm3B initiates the biosynthesis of beauveriolides by iteratively catalyzing the formation of the linear polyketide chain. The ATP-dependent acetyl-CoA ligase cm3D converts the polyketide carboxylic acid to a CoA thioester which id shuttled to the first T domain in the NRPS cm3A by the acetyltransferase cm3C. Cm3A contains 13 domains and assembles the polyketide chain, L-phenylalanine, L-alanine, and D-leucine (or D-allo-isoleucine) to form beauveriolide I (or beauveriolide III). The production of both beauveriolides I and III suggests the substrate adaptability of cm3B, using different amino acids as substrates. The protein is Acyl-CoA ligase cm3C of Cordyceps militaris (strain CM01) (Caterpillar fungus).